The chain runs to 508 residues: Histidine ammonia-lyase (508 aa).

The segment at residues 141-143 (ASG) is a cross-link (5-imidazolinone (Ala-Gly)). The residue at position 142 (Ser142) is a 2,3-didehydroalanine (Ser).

The protein belongs to the PAL/histidase family. In terms of processing, contains an active site 4-methylidene-imidazol-5-one (MIO), which is formed autocatalytically by cyclization and dehydration of residues Ala-Ser-Gly.

The protein localises to the cytoplasm. The catalysed reaction is L-histidine = trans-urocanate + NH4(+). It participates in amino-acid degradation; L-histidine degradation into L-glutamate; N-formimidoyl-L-glutamate from L-histidine: step 1/3. This Bacillus subtilis (strain 168) protein is Histidine ammonia-lyase (hutH).